Consider the following 533-residue polypeptide: Thromboxane-A synthase (533 aa).

The Cytoplasmic portion of the chain corresponds to 1–10 (MEVLGLLKFE). The helical transmembrane segment at 11–31 (VSGTVVTVTLSVVLLALLKWY) threads the bilayer. Over 32-75 (STSAFSRLRKLGIRHPEPSPFVGNLMFFRQGFWESHLELRERYG) the chain is Lumenal. The chain crosses the membrane as a helical span at residues 76–96 (PLCGYYLGRRMYIVISDPDMI). Topologically, residues 97–223 (KEVLVENFSN…QRVFAFSTPR (127 aa)) are cytoplasmic. A helical membrane pass occupies residues 224–244 (PLLALILSFPSIMVPLARILP). At 245–335 (NKNRDELNGF…LTVDEIAGQA (91 aa)) the chain is on the lumenal side. The chain crosses the membrane as a helical span at residues 336-356 (FLFLIAGHEITTNTLSFITYL). Residues 357–533 (LATHPECQER…NGVYVKIVSR (177 aa)) lie on the Cytoplasmic side of the membrane. Position 479 (Cys479) interacts with heme.

It belongs to the cytochrome P450 family. As to quaternary structure, monomer. Requires heme as cofactor. As to expression, expressed in bone marrow, spleen, lung, thymus, liver, uterus, and macrophages.

The protein localises to the endoplasmic reticulum membrane. The catalysed reaction is prostaglandin H2 = thromboxane A2. It carries out the reaction prostaglandin H2 = (12S)-hydroxy-(5Z,8E,10E)-heptadecatrienoate + malonaldehyde. The enzyme catalyses a hydroperoxyeicosatetraenoate = an oxoeicosatetraenoate + H2O. It catalyses the reaction (15S)-hydroperoxy-(5Z,8Z,11Z,13E)-eicosatetraenoate = 15-oxo-(5Z,8Z,11Z,13E)-eicosatetraenoate + H2O. The catalysed reaction is (15S)-hydroperoxy-(5Z,8Z,11Z,13E)-eicosatetraenoate + AH2 = (15S)-hydroxy-(5Z,8Z,11Z,13E)-eicosatetraenoate + A + H2O. Functionally, catalyzes the conversion of prostaglandin H2 (PGH2) to thromboxane A2 (TXA2), a potent inducer of blood vessel constriction and platelet aggregation. Also cleaves PGH2 to 12-hydroxy-heptadecatrienoicacid (12-HHT) and malondialdehyde, which is known to act as a mediator of DNA damage. 12-HHT and malondialdehyde are formed stoichiometrically in the same amounts as TXA2. Additionally, displays dehydratase activity, toward (15S)-hydroperoxy-(5Z,8Z,11Z,13E)-eicosatetraenoate (15(S)-HPETE) producing 15-KETE and 15-HETE. The protein is Thromboxane-A synthase (Tbxas1) of Rattus norvegicus (Rat).